A 489-amino-acid polypeptide reads, in one-letter code: MMNRIITANLANLASSLMLAQVLGWHEPVYPDQVKWAGLGTGVCASGYRPLTRDEAMSIKGNLVSRMGQWQITGLADRWVIMGPGYNGEIKQGTAGETWCYPNSPVSGEIPTLSDWNIPAGDEVDVQWRLVHDNDYFIKPVSYLAHYLGYAWVGGNHSPYVGEDMDVTRVGDGWLIKGNNDGGCSGYRCGEKSSIKVSNFSYTLEPDSFSHGQVTESGKQLVKTITANATNYTDLPQQVVVTLKYDKATNWSKTDTYSLSEKVTTKNKFQWPLVGETELAIEIAASQSWASQKGGSTTETVSVEARPTVPPHSSLPVRVALYKSNISYPYEFKAEVNYDLTMKGFLRWGGNAWYTHPDNRPTWEHTFRLGPFRGQGEQHPLPVDKRYIPGEVKWWDWNWTISEYGLSTMQNNLGRVLRPIRSAVTGDFYAESQFAGDIEIGQPQTRSAKAAQLRSASAEEVALTSVDLDSEALANEGFGNVSLTIVPVQ.

The signal sequence occupies residues 1–24 (MMNRIITANLANLASSLMLAQVLG). 2 disulfide bridges follow: Cys44–Cys100 and Cys184–Cys189. Residues 70 to 86 (WQITGLADRWVIMGPGY) form an interaction with host N-linked glycan region. The interval 257–289 (YSLSEKVTTKNKFQWPLVGETELAIEIAASQSW) is part of the transmembrane beta-barrel after proteolytic activation of the toxin and insertion into the host membrane. The interaction with glycans from host GPI-anchor stretch occupies residues 347–356 (RWGGNAWYTH). A propeptide spanning residues 445-489 (TRSAKAAQLRSASAEEVALTSVDLDSEALANEGFGNVSLTIVPVQ) is cleaved from the precursor.

It belongs to the aerolysin family. As to quaternary structure, homodimer in solution; homoheptamer in the host membrane. After binding to GPI-anchored proteins in target membranes and proteolytic removal of the C-terminal propeptide, the protein assembles into a heptameric pre-pore complex. A further conformation change leads to insertion into the host membrane. Proteolytic cleavage and subsequent release of the propeptide trigger a major conformation change, leading to the formation of a heptameric pre-pore that then inserts into the host membrane.

The protein localises to the secreted. It localises to the host cell membrane. Secreted, cytolytic toxin that forms pores in host membranes after proteolytic removal of a C-terminal propeptide, leading to destruction of the membrane permeability barrier and cell death. The pores are formed by transmembrane beta-strands and are approximately 3 nm in diameter. The chain is Aerolysin (ash3) from Aeromonas salmonicida.